The primary structure comprises 328 residues: Glycerol-3-phosphate dehydrogenase [NAD(P)+] (328 aa).

3 residues coordinate NADPH: W11, R30, and K103. Positions 103, 132, and 134 each coordinate sn-glycerol 3-phosphate. NADPH is bound at residue A136. Sn-glycerol 3-phosphate-binding residues include K187, D240, S250, R251, and N252. The active-site Proton acceptor is the K187. R251 provides a ligand contact to NADPH. 2 residues coordinate NADPH: V275 and E277.

The protein belongs to the NAD-dependent glycerol-3-phosphate dehydrogenase family.

The protein localises to the cytoplasm. The catalysed reaction is sn-glycerol 3-phosphate + NAD(+) = dihydroxyacetone phosphate + NADH + H(+). It carries out the reaction sn-glycerol 3-phosphate + NADP(+) = dihydroxyacetone phosphate + NADPH + H(+). It participates in membrane lipid metabolism; glycerophospholipid metabolism. In terms of biological role, catalyzes the reduction of the glycolytic intermediate dihydroxyacetone phosphate (DHAP) to sn-glycerol 3-phosphate (G3P), the key precursor for phospholipid synthesis. The sequence is that of Glycerol-3-phosphate dehydrogenase [NAD(P)+] from Aromatoleum aromaticum (strain DSM 19018 / LMG 30748 / EbN1) (Azoarcus sp. (strain EbN1)).